Here is a 116-residue protein sequence, read N- to C-terminus: Large ribosomal subunit protein bL19 (116 aa).

It belongs to the bacterial ribosomal protein bL19 family.

Its function is as follows. This protein is located at the 30S-50S ribosomal subunit interface and may play a role in the structure and function of the aminoacyl-tRNA binding site. This Staphylococcus carnosus (strain TM300) protein is Large ribosomal subunit protein bL19.